We begin with the raw amino-acid sequence, 212 residues long: Adenylate kinase (212 aa).

10-15 (GAGKGT) provides a ligand contact to ATP. Residues 30 to 59 (ALGDIFRTIIKTSTSEAELINNYVKQGELV) form an NMP region. AMP contacts are provided by residues Arg36, 57–59 (ELV), 85–88 (GYPR), and Gln92. The LID stretch occupies residues 122–160 (GRYSCKNCRKIYNSYFLQPKTDNVCDVCGSSTFDYRKDD). Arg123 serves as a coordination point for ATP. Zn(2+) contacts are provided by Cys126 and Cys129. ATP is bound at residue 132–133 (IY). The Zn(2+) site is built by Cys146 and Cys149. Positions 157 and 168 each coordinate AMP. Position 196 (Lys196) interacts with ATP.

The protein belongs to the adenylate kinase family. As to quaternary structure, monomer.

It is found in the cytoplasm. It carries out the reaction AMP + ATP = 2 ADP. It functions in the pathway purine metabolism; AMP biosynthesis via salvage pathway; AMP from ADP: step 1/1. In terms of biological role, catalyzes the reversible transfer of the terminal phosphate group between ATP and AMP. Plays an important role in cellular energy homeostasis and in adenine nucleotide metabolism. This Rickettsia akari (strain Hartford) protein is Adenylate kinase.